Consider the following 237-residue polypeptide: N-(5'-phosphoribosyl)anthranilate isomerase (237 aa).

It belongs to the TrpF family.

It catalyses the reaction N-(5-phospho-beta-D-ribosyl)anthranilate = 1-(2-carboxyphenylamino)-1-deoxy-D-ribulose 5-phosphate. The protein operates within amino-acid biosynthesis; L-tryptophan biosynthesis; L-tryptophan from chorismate: step 3/5. This Desulfitobacterium hafniense (strain DSM 10664 / DCB-2) protein is N-(5'-phosphoribosyl)anthranilate isomerase.